Consider the following 301-residue polypeptide: Sulfate adenylyltransferase subunit 2 (301 aa).

A disordered region spans residues 279–301 (RQGRLIDRDEAGSMEKKKREGYF).

Belongs to the PAPS reductase family. CysD subfamily. In terms of assembly, heterodimer composed of CysD, the smaller subunit, and CysN.

It carries out the reaction sulfate + ATP + H(+) = adenosine 5'-phosphosulfate + diphosphate. It participates in sulfur metabolism; hydrogen sulfide biosynthesis; sulfite from sulfate: step 1/3. Functionally, with CysN forms the ATP sulfurylase (ATPS) that catalyzes the adenylation of sulfate producing adenosine 5'-phosphosulfate (APS) and diphosphate, the first enzymatic step in sulfur assimilation pathway. APS synthesis involves the formation of a high-energy phosphoric-sulfuric acid anhydride bond driven by GTP hydrolysis by CysN coupled to ATP hydrolysis by CysD. This Mesorhizobium japonicum (strain LMG 29417 / CECT 9101 / MAFF 303099) (Mesorhizobium loti (strain MAFF 303099)) protein is Sulfate adenylyltransferase subunit 2.